Here is a 103-residue protein sequence, read N- to C-terminus: Large ribosomal subunit protein uL24 (103 aa).

The protein belongs to the universal ribosomal protein uL24 family. Part of the 50S ribosomal subunit.

Functionally, one of two assembly initiator proteins, it binds directly to the 5'-end of the 23S rRNA, where it nucleates assembly of the 50S subunit. In terms of biological role, one of the proteins that surrounds the polypeptide exit tunnel on the outside of the subunit. The protein is Large ribosomal subunit protein uL24 of Listeria monocytogenes serotype 4a (strain HCC23).